The sequence spans 758 residues: 5-methyltetrahydropteroyltriglutamate--homocysteine methyltransferase (758 aa).

5-methyltetrahydropteroyltri-L-glutamate is bound by residues Arg16–Lys19 and Lys112. L-homocysteine is bound by residues Ile433–Ser435 and Glu486. Residues Ile433–Ser435 and Glu486 contribute to the L-methionine site. 5-methyltetrahydropteroyltri-L-glutamate is bound by residues Arg517–Cys518 and Trp563. Asp601 is an L-homocysteine binding site. Residue Asp601 coordinates L-methionine. A 5-methyltetrahydropteroyltri-L-glutamate-binding site is contributed by Glu607. Zn(2+)-binding residues include His643, Cys645, and Glu667. Catalysis depends on His696, which acts as the Proton donor. Cys728 lines the Zn(2+) pocket.

The protein belongs to the vitamin-B12 independent methionine synthase family. It depends on Zn(2+) as a cofactor.

It catalyses the reaction 5-methyltetrahydropteroyltri-L-glutamate + L-homocysteine = tetrahydropteroyltri-L-glutamate + L-methionine. It functions in the pathway amino-acid biosynthesis; L-methionine biosynthesis via de novo pathway; L-methionine from L-homocysteine (MetE route): step 1/1. In terms of biological role, catalyzes the transfer of a methyl group from 5-methyltetrahydrofolate to homocysteine resulting in methionine formation. In Neisseria meningitidis serogroup A / serotype 4A (strain DSM 15465 / Z2491), this protein is 5-methyltetrahydropteroyltriglutamate--homocysteine methyltransferase.